The primary structure comprises 500 residues: Beta-glucosidase 30 (500 aa).

Positions 1–25 (MGIRMGRRLLFTLFLGALFCNGVYA) are cleaved as a signal peptide. Gln46 contributes to the a beta-D-glucoside binding site. Residues Asn63 and Asn114 are each glycosylated (N-linked (GlcNAc...) asparagine). A beta-D-glucoside contacts are provided by residues His149 and 194 to 195 (NE). The active-site Proton donor is the Glu195. A disulfide bridge links Cys214 with Cys222. Tyr338 serves as a coordination point for a beta-D-glucoside. Residue Asn363 is glycosylated (N-linked (GlcNAc...) asparagine). Residue Glu409 participates in a beta-D-glucoside binding. The active-site Nucleophile is Glu409. N-linked (GlcNAc...) asparagine glycans are attached at residues Asn416 and Asn417. A beta-D-glucoside-binding positions include Trp456, 463-464 (EW), and Phe472.

Belongs to the glycosyl hydrolase 1 family.

It catalyses the reaction Hydrolysis of terminal, non-reducing beta-D-glucosyl residues with release of beta-D-glucose.. This chain is Beta-glucosidase 30 (BGLU30), found in Oryza sativa subsp. japonica (Rice).